Consider the following 201-residue polypeptide: MEITNAEFVISNTDVKKCPAGTFPEYAFIGRSNVGKSSLINMLTGRKGLAMTSATPGKTMLINHFLINNSWYLVDLPGYGYARRGQKGQKQIRTIIEDYILEREQMTNLFVLIDSRLEPQKIDLEFMEWLGENGIPFAIIFTKADKLKGGRLKINISAYLRELRKQWEELPPYFITSSEERLGRTEVLNYIESINKELNSK.

The EngB-type G domain occupies 22–197 (TFPEYAFIGR…LNYIESINKE (176 aa)). GTP-binding positions include 30–37 (GRSNVGKS), 57–61 (GKTML), 75–78 (DLPG), 142–145 (TKAD), and 175–178 (ITSS). The Mg(2+) site is built by S37 and T59.

The protein belongs to the TRAFAC class TrmE-Era-EngA-EngB-Septin-like GTPase superfamily. EngB GTPase family. The cofactor is Mg(2+).

Necessary for normal cell division and for the maintenance of normal septation. This chain is Probable GTP-binding protein EngB, found in Bacteroides fragilis (strain ATCC 25285 / DSM 2151 / CCUG 4856 / JCM 11019 / LMG 10263 / NCTC 9343 / Onslow / VPI 2553 / EN-2).